A 423-amino-acid polypeptide reads, in one-letter code: Large ribosomal subunit protein mL37 (423 aa).

Residues 1-29 constitute a mitochondrion transit peptide; it reads MALASGPARRALAGSGQLGLGGFGAPRRG.

It belongs to the mitochondrion-specific ribosomal protein mL37 family. Component of the mitochondrial large ribosomal subunit (mt-LSU). Mature mammalian 55S mitochondrial ribosomes consist of a small (28S) and a large (39S) subunit. The 28S small subunit contains a 12S ribosomal RNA (12S mt-rRNA) and 30 different proteins. The 39S large subunit contains a 16S rRNA (16S mt-rRNA), a copy of mitochondrial valine transfer RNA (mt-tRNA(Val)), which plays an integral structural role, and 52 different proteins. mL37 forms a heterodimer with mL65.

It is found in the mitochondrion. The protein is Large ribosomal subunit protein mL37 (MRPL37) of Homo sapiens (Human).